A 171-amino-acid chain; its full sequence is ATP synthase subunit b (171 aa).

A helical transmembrane segment spans residues 2–22 (FVVKMVLGFLILLSPLCATGL).

Belongs to the ATPase B chain family. F-type ATPases have 2 components, F(1) - the catalytic core - and F(0) - the membrane proton channel. F(1) has five subunits: alpha(3), beta(3), gamma(1), delta(1), epsilon(1). F(0) has three main subunits: a(1), b(2) and c(10-14). The alpha and beta chains form an alternating ring which encloses part of the gamma chain. F(1) is attached to F(0) by a central stalk formed by the gamma and epsilon chains, while a peripheral stalk is formed by the delta and b chains.

The protein localises to the cell inner membrane. Its function is as follows. F(1)F(0) ATP synthase produces ATP from ADP in the presence of a proton or sodium gradient. F-type ATPases consist of two structural domains, F(1) containing the extramembraneous catalytic core and F(0) containing the membrane proton channel, linked together by a central stalk and a peripheral stalk. During catalysis, ATP synthesis in the catalytic domain of F(1) is coupled via a rotary mechanism of the central stalk subunits to proton translocation. In terms of biological role, component of the F(0) channel, it forms part of the peripheral stalk, linking F(1) to F(0). The protein is ATP synthase subunit b of Helicobacter pylori (strain G27).